The following is an 857-amino-acid chain: DNA mismatch repair protein MutS (857 aa).

An ATP-binding site is contributed by 613–620 (GPNMGGKS). The interval 797–820 (TSLPHEQPAAHKAKDAPQVPHQSD) is disordered.

It belongs to the DNA mismatch repair MutS family.

In terms of biological role, this protein is involved in the repair of mismatches in DNA. It is possible that it carries out the mismatch recognition step. This protein has a weak ATPase activity. This chain is DNA mismatch repair protein MutS, found in Pseudomonas putida (strain ATCC 47054 / DSM 6125 / CFBP 8728 / NCIMB 11950 / KT2440).